The sequence spans 61 residues: uncharacterized protein (61 aa).

Positions 39–61 (PRPFTPGLADPRRLGPRRVQAAQ) are disordered.

This is an uncharacterized protein from Pan troglodytes (Chimpanzee).